The sequence spans 142 residues: Transcriptional regulator MraZ (142 aa).

2 SpoVT-AbrB domains span residues 5 to 51 (SSAL…PRPE) and 77 to 120 (AQDV…DAAS).

The protein belongs to the MraZ family. Forms oligomers.

The protein localises to the cytoplasm. It is found in the nucleoid. The polypeptide is Transcriptional regulator MraZ (Bordetella bronchiseptica (strain ATCC BAA-588 / NCTC 13252 / RB50) (Alcaligenes bronchisepticus)).